Here is a 474-residue protein sequence, read N- to C-terminus: Citrate synthase, mitochondrial (474 aa).

Residues 1-35 (MASTLRLSTSALRSSTLAGKPVVQSVAFNGLRCYS) constitute a mitochondrion transit peptide. Catalysis depends on residues H310, H356, and D411.

This sequence belongs to the citrate synthase family.

The protein localises to the mitochondrion matrix. It catalyses the reaction oxaloacetate + acetyl-CoA + H2O = citrate + CoA + H(+). Its pathway is carbohydrate metabolism; tricarboxylic acid cycle; isocitrate from oxaloacetate: step 1/2. The sequence is that of Citrate synthase, mitochondrial (citA) from Emericella nidulans (strain FGSC A4 / ATCC 38163 / CBS 112.46 / NRRL 194 / M139) (Aspergillus nidulans).